Here is a 392-residue protein sequence, read N- to C-terminus: 8-amino-7-oxononanoate synthase (392 aa).

Substrate is bound at residue Arg-21. A pyridoxal 5'-phosphate-binding site is contributed by 108–109; that stretch reads GF. Residue His-133 coordinates substrate. Pyridoxal 5'-phosphate is bound by residues Ser-181, 206–209, and 237–240; these read DDAH and TLSK. Lys-240 carries the post-translational modification N6-(pyridoxal phosphate)lysine. Thr-354 contributes to the substrate binding site.

It belongs to the class-II pyridoxal-phosphate-dependent aminotransferase family. BioF subfamily. As to quaternary structure, homodimer. It depends on pyridoxal 5'-phosphate as a cofactor.

It catalyses the reaction 6-carboxyhexanoyl-[ACP] + L-alanine + H(+) = (8S)-8-amino-7-oxononanoate + holo-[ACP] + CO2. It functions in the pathway cofactor biosynthesis; biotin biosynthesis. In terms of biological role, catalyzes the decarboxylative condensation of pimeloyl-[acyl-carrier protein] and L-alanine to produce 8-amino-7-oxononanoate (AON), [acyl-carrier protein], and carbon dioxide. This is 8-amino-7-oxononanoate synthase from Symbiobacterium thermophilum (strain DSM 24528 / JCM 14929 / IAM 14863 / T).